Reading from the N-terminus, the 368-residue chain is UDP-N-acetylglucosamine--N-acetylmuramyl-(pentapeptide) pyrophosphoryl-undecaprenol N-acetylglucosamine transferase (368 aa).

Residues Thr-10–Gly-12, Asn-126, Ser-200, Ile-255, and Gln-300 contribute to the UDP-N-acetyl-alpha-D-glucosamine site.

Belongs to the glycosyltransferase 28 family. MurG subfamily.

It is found in the cell membrane. It catalyses the reaction Mur2Ac(oyl-L-Ala-gamma-D-Glu-L-Lys-D-Ala-D-Ala)-di-trans,octa-cis-undecaprenyl diphosphate + UDP-N-acetyl-alpha-D-glucosamine = beta-D-GlcNAc-(1-&gt;4)-Mur2Ac(oyl-L-Ala-gamma-D-Glu-L-Lys-D-Ala-D-Ala)-di-trans,octa-cis-undecaprenyl diphosphate + UDP + H(+). It participates in cell wall biogenesis; peptidoglycan biosynthesis. Cell wall formation. Catalyzes the transfer of a GlcNAc subunit on undecaprenyl-pyrophosphoryl-MurNAc-pentapeptide (lipid intermediate I) to form undecaprenyl-pyrophosphoryl-MurNAc-(pentapeptide)GlcNAc (lipid intermediate II). In Lactobacillus acidophilus (strain ATCC 700396 / NCK56 / N2 / NCFM), this protein is UDP-N-acetylglucosamine--N-acetylmuramyl-(pentapeptide) pyrophosphoryl-undecaprenol N-acetylglucosamine transferase.